The primary structure comprises 269 residues: Shikimate dehydrogenase (NADP(+)) (269 aa).

Shikimate-binding positions include 17 to 19 (SKS) and Thr-64. Lys-68 acts as the Proton acceptor in catalysis. Position 80 (Glu-80) interacts with NADP(+). Shikimate-binding residues include Asn-89 and Asp-105. NADP(+)-binding positions include 130-134 (GAGGA), 154-159 (NRTRAK), and Met-213. Tyr-215 serves as a coordination point for shikimate. Gly-237 provides a ligand contact to NADP(+).

This sequence belongs to the shikimate dehydrogenase family. As to quaternary structure, homodimer.

The catalysed reaction is shikimate + NADP(+) = 3-dehydroshikimate + NADPH + H(+). It functions in the pathway metabolic intermediate biosynthesis; chorismate biosynthesis; chorismate from D-erythrose 4-phosphate and phosphoenolpyruvate: step 4/7. In terms of biological role, involved in the biosynthesis of the chorismate, which leads to the biosynthesis of aromatic amino acids. Catalyzes the reversible NADPH linked reduction of 3-dehydroshikimate (DHSA) to yield shikimate (SA). This Neisseria meningitidis serogroup B (strain ATCC BAA-335 / MC58) protein is Shikimate dehydrogenase (NADP(+)).